The primary structure comprises 286 residues: 3-methyl-2-oxobutanoate hydroxymethyltransferase (286 aa).

Positions 67 and 106 each coordinate Mg(2+). 3-methyl-2-oxobutanoate contacts are provided by residues 67-68, aspartate 106, and lysine 136; that span reads DS. Residue glutamate 138 participates in Mg(2+) binding. Glutamate 204 functions as the Proton acceptor in the catalytic mechanism.

Belongs to the PanB family. Homodecamer; pentamer of dimers. Requires Mg(2+) as cofactor.

Its subcellular location is the cytoplasm. It catalyses the reaction 3-methyl-2-oxobutanoate + (6R)-5,10-methylene-5,6,7,8-tetrahydrofolate + H2O = 2-dehydropantoate + (6S)-5,6,7,8-tetrahydrofolate. Its pathway is cofactor biosynthesis; (R)-pantothenate biosynthesis; (R)-pantoate from 3-methyl-2-oxobutanoate: step 1/2. Its function is as follows. Catalyzes the reversible reaction in which hydroxymethyl group from 5,10-methylenetetrahydrofolate is transferred onto alpha-ketoisovalerate to form ketopantoate. This chain is 3-methyl-2-oxobutanoate hydroxymethyltransferase, found in Mycobacterium leprae (strain TN).